The chain runs to 9439 residues: MSGTLHNTVGSGILPYQQEIRIKLTSNEPIKDSEWSITGYPNTLTLQNAVGRTNNATEKNLALVGHIDPGNYFITVKFGDKVEQFEIRSKPTPPRIITTANELRGNPNHKPEIRVTDIPNDTTAKIKLVMGGTDGDHDPEINPYTVPENYTVVAEAYHDNDPSKNGVLTFRSSDYLKDLPLSGELKAIVYYNQYVQSNFSKSVPFSSDTTPPTINEPAGLVHKYYRGDHVEITLPVTDNTGGSGLRDVNVNLPQGWTKTFTINPNNNTEGTLKLIGNIPSNEAYNTTYHFNITATDNSGNTTNPAKTFILNVGKLADDLNPVGLSRDQLQLVTDPSSLSNSEREEVKRKISEANANIRSYLLQNNPILAGVNGDVTFYYRDGSVDVIDAENVITYEPERKSIFSENGNTNKKEAVITIARGQNYTIGPNLRKYFSLSNGSDLPNRDFTSISAIGSLPSSSEISRLNVGNYNYRVNAKNAYHKTQQELNLKLKIVEVNAPTGNNRVYRVSTYNLTNDEINKIKQAFKAANSGLNLNDNDITVSNNFDHRNVSSVTVTIRKGDLIKEFSSNLNNMNFLRWVNIRDDYTISWTSSKIQGRNTDGGLEWSPDHKSLIYKYDATLGRQINTNDVLTLLQATAKNSNLRSNINSNEKQLAERGSNGYSKSIIRDDGEKSYLLNSNPIQVLDLVEPDNGYGGRQVSHSNVIYNEKNSSIVNGQVPEANGASAFNIDKVVKANAANNGIMGVIYKAQLYLAPYSPKGYIEKLGQNLSNTNNVINVYFVPSDKVNPSITVGNYDHHTVYSGETFKNTINVNDNYGLNTVASTSDSAITMTRNNNELVGQAPNVTNSINKIVKVKATDKSGNESIVSFTVNIKPLNEKYRITTSSSNQTPVRISNIQNNANLSIEDQNRVKSSLSMTKILGTRNYVNESNNDVRSQVVSKVNRSGNNATVNVTTTFSDGTTNTITVPVKHVLLEVVPTTRTTVRGQQFPTGKGTSPNDFFSLRTGGPVDARIVWVNNQGPDINSNQIGRDLTLHAEIFFDGETTPIRKDTTYKLSQSIPKQIYETTINGRFNSSGDAYPGNFVQAVNQYWPEHMDFRWAQGSGTPSSRNAGSFTKTVTVVYQNGQTENVNVLFKVKPNKPVIDSNSVISKGQLNGQQILVRNVPQNAQVTLYQSNGTVIPNTNTTIDSNGIATVTIQGTLPTGNITAKTSMTNNVTYTKQNSSGIASNTTEDISVFSENSDQVNVTAGMQAKNDGIKIIKGTNYNFNDFNSFISNIPAHSTLTWNEEPNSWKNNIGTTTKTVTVTLPNHQGTRTVDIPITIYPTVTAKNPVRDQKGRNLTNGTDVYNYIIFENNNRLGGTASWKDNRQPDKNIAGVQNLIALVNYPGISTPLEVPVKVWVYNFDFTQPIYKIQVGDTFPKGTWAGYYKHLENGEGLPIDGWKFYWNQQSTGTTSDQWQSLAYTRTPFVKTGTYDVVNPSNWGVWQTSQSAKFIVTNAKPNQPTITQSKTGDVTVTPGAVRNILISGTNDYIQASADKIVINKNGNKLTTFVKNNDGRWTVETGSPDINGIGPTNNGTAISLSRLAVRPGDSIEAIATEGSGETISTSATSEIYIVKAPQPEQVATHTYDNGTFDILPDNSRNSLNPTERVEINYTEKLNGNETQKSFTITKNNNGKWTINNKPNYVEFNQDNGKVVFSANTIKPNSQITITPKAGQGNTENTNPTVIQAPAQHTLTINEIVKEQGQNVTNDDINNAVQVPNKNRVAIKQGNALPTNLAGGSTSHIPVVIYYSDGSSEEATETVRTKVNKTELINARRRLDEEISKENKTPSSIRNFDQAMNRAQSQINTAKSDADQVIGTEFATPQQVNSALSKVQAAQNKINEAKALLQNKADNSQLVRAKEQLQQSIQPAASTDGMTQDSTRNYNNKRQAAEQAIQHANSVINNGDATSQQINDAKNTVEQAQRDYVEAKSNLRADKSQLQSAYDTLNRDVLTNDKKPASVRRYNEAISNIRKELDTAKADASSTLRNTNPSVEQVRDALNKINTVQPKVNQAIALLQPKENNSELVQAKKRLQDAVNDIPQTQGMTQQTINNYNDKQREAERALTSAQRVIDNGDATTQEITSEKSKVEQAMQALTNAKSNLRADKNELQTAYNKLIENVSTNGKKPASIRQYETAKARIQNQINDAKNEAERILGNDNPQVSQVTQALNKIKAIQPKLTEAINMLQNKENNTELVNAKNRLENAVNDTDPTHGMTQETINNYNAKKREAQNEIQKANMIINNGDATAQDISSEKSKVEQVLQALQNAKNDLRADKRELQTAYNKLIQNVNTNGKKPSSIQNYKSARRNIENQYNTAKNEAHNVLENTNPTVNAVEDALRKINAIQPEVTKAINILQDKEDNSELVRAKEKLDQAINSQPSLNGMTQESINNYTTKRREAQNIASSADTIINNGDASIEQITENKIRVEEATNALNEAKQHLTADTTSLKTEVRKLSRRGDTNNKKPSSVSAYNNTIHSLQSEITQTENRANTIINKPIRSVEEVNNALHEVNQLNQRLTDTINLLQPLANKESLKEARNRLESKINETVQTDGMTQQSVENYKQAKIKAQNESSIAQTLINNGDASDQEVSTEIEKLNQKLSELTNSINHLTVNKEPLETAKNQLQANIDQKPSTDGMTQQSVQSYERKLQEAKDKINSINNVLANNPDVNAIRTNKVETEQINNELTQAKQGLTVDKQPLINAKTALQQSLDNQPSTTGMTEATIQNYNAKRQKAEQVIQNANKIIENAQPSVQQVSDEKSKVEQALSELNNAKSALRADKQELQQAYNQLIQPTDLNNKKPASITAYNQRYQQFSNELNSTKTNTDRILKEQNPSVADVNNALNKVREVQQKLNEARALLQNKEDNSALVRAKEQLQQAVDQVPSTEGMTQQTKDDYNSKQQAAQQEISKAQQVIDNGDATTQQISNAKTNVERALEALNNAKTGLRADKEELQNAYNQLTQNIDTSGKTPASIRKYNEAKSRIQTQIDSAKNEANSILTNDNPQVSQVTAALNKIKAVQPELDKAIAMLKNKENNNALVQAKQQLQQIVNEVDPTQGMTTDTANNYKSKKREAEDEIQKAQQIINNGDATEQQITNETNRVNQAINAINKAKNDLRADKSQLENAYNQLIQNVDTNGKKPASIQQYQAARQAIETQYNNAKSEAHQILENSNPSVNEVAQALQKVEAVQLKVNDAIHILQNKENNSALVTAKNQLQQSVNDQPLTTGMTQDSINNYEAKRNEAQSAIRNAEAVINNGDATAKQISDEKSKVEQALAHLNDAKQQLTADTTELQTAVQQLNRRGDTNNKKPRSINAYNKAIQSLETQITSAKDNANAVIQKPIRTVQEVNNALQQVNQLNQQLTEAINQLQPLSNNDALKAARLNLENKINQTVQTDGMTQQSIEAYQNAKRVAQNESNTALALINNGDADEQQITTETDRVNQQTTNLTQAINGLTVNKEPLETAKTALQNNIDQVPSTDGMTQQSVANYNQKLQIAKNEINTINNVLANNPDVNAIKTNKAEAERISNDLTQAKNNLQVDTQPLEKIKRQLQDEIDQGTNTDGMTQDSVDNYNDSLSAAIIEKGKVNKLLKRNPTVEQVKESVANAQQVIQDLQNARTSLVPDKTQLQEAKNRLENSINQQTDTDGMTQDSLNNYNDKLAKARQNLEKISKVLGGQPTVAEIRQNTDEANAHKQALDTARSQLTLNREPYINHINNESHLNNAQKDNFKAQVNSAPNHNTLETIKNKADTLNQSMTALSESIADYENQKQQENYLDASNNKRQDYDNAVNAAKGILNQTQSPTMSADVIDQKAEDVKRTKTALDGNQRLEVAKQQALNHLNTLNDLNDAQRQTLTDTINHSPNINSVNQAKEKANTVNTAMTQLKQTIANYDDELHDGNYINADKDKKDAYNNAVNNAKQLINQSDANQAQLDPAEINKVTQRVNTTKNDLNGNDKLAEAKRDANTTIDGLTYLNEAQRNKAKENVGKASTKTNITSQLQDYNQLNIAMQALRNSVNDVNNVKANSNYINEDNGPKEAYNQAVTHAQTLINAQSNPEMSRDVVNQKTQAVNTAHQNLHGQQKLEQAQSSANTEIGNLPNLTNTQKAKEKELVNSKQTRTEVQEQLNQAKSLDSSMGTLKSLVAKQPTVQKTSVYINEDQPEQSAYNDSITMGQTIINKTADPVLDKTLVDNAISNISTKENALHGEQKLTTAKTEAINALNTLADLNTPQKEAIKTAINTAHTRTDVTAEQSKANQINSAMHTLRQNISDNESVTNESNYINAEPEKQHAFTEALNNAKEIVNEQQATLDANSINQKAQAILTTKNALDGEEQLRRAKENADQEINTLNQLTDAQRNSEKGLVNSSQTRTEVASQLAKAKELNKVMEQLNHLINGKNQMINSSKFINEDANQQQAYSNAIASAEALKNKSQNPELDKVTIEQAINNINSAINNLNGEAKLTKAKEDAVASINNLSGLTNEQKTKENQAVNGAQTRDQVANKLRDAEALDQSMQTLRDLVNNQNAIHSTSNYFNEDSTQKNTYDNAIDNGSTYITGQHNPELNKSTIDQTISRINTAKNDLHGVEKLQRDKGTANQEIGQLGYLNDPQKSGEESLVNGSNTRSEVEEHLNEAKSLNNAMKQLRDKVAEKTNVKQSSDYINDSTEHQRGYDQALQEAENIINEIGNPTLNKSEIEQKLQQLTDAQNALQGSHLLEEAKNNAITGINKLTALNDAQRQKAIENVQAQQTIPAVNQQLTLDREINTAMQALRDKVGQQNNVHQQSNYFNEDEQPKHNYDNSVQAGQTIIDKLQDPIMNKNEIEQAINQINTTQTALSGENKLHTDQESTNRQIEGLSSLNTAQINAEKDLVNQAKTRTDVAQKLAAAKEINSAMSNLRDGIQNKEDIKRSSAYINADPTKVTAYDQALQNAENIINATPNVELNKATIEQALSRVQQAQQDLDGVQQLANAKQQATQTVNGLNSLNDGQKRELNLLINSANTRTKVQEELNKATELNHAMEALRNSVQNVDQVKQSSNYVNEDQPEQHNYDNAVNEAQATINNNAQPVLDKLAIERLTQTVNTTKDALHGAQKLTQDQQAAETGIRGLTSLNEPQKNAEVAKVTAATTRDEVRNIRQEATTLDTAMLGLRKSIKDKNDTKNSSKYINEDHDQQQAYDNAVNNAQQVIDETQATLSSDTINQLANAVTQAKSNLHGDTKLQHDKDSAKQTIAQLQNLNSAQKHMEDSLIDNESTRTQVQHDLTEAQALDGLMGALKESIKDYTNIVSNGNYINAEPSKKQAYDAAVQNAQNIINGTNQPTINKGNVTTATQTVKNTKDALDGDHRLEEAKNNANQTIRNLSNLNNAQKDAEKNLVNSASTLEQVQQNLQTAQQLDNAMGELRQSIAKKDQVKADSKYLNEDPQIKQNYDDAVQRVETIINETQNPELLKANIDQATQSVQNAEQALHGAEKLNQDKQTSSTELDGLTDLTDAQREKLREQINTSNSRDDIKQKIEQAKALNDAMKKLKEQVAQKDGVHANSDYTNEDSAQKDAYNNALKQAEDIINNSSNPNLNAQDITNALNNIKQAQDNLHGAQKLQQDKNTTNQAIGNLNHLNQPQKDALIQAINGATSRDQVAEKLKEAEALDEAMKQLEDQVNQDDQISNSSPFINEDSDKQKTYNDKIQAAKEIINQTSNPTLDKQKIADTLQNIKDAVNNLHGDQKLAQSKQDANNQLNHLDDLTEEQKNHFKPLINNADTRDEVNKQLEIAKQLNGDMSTLHKVINDKDQIQHLSNYINADNDKKQNYDNAIKEAEDLIHNHPDTLDHKALQDLLNKIDQAHNELNGESRFKQALDNALNDIDSLNSLNVPQRQTVKDNINHVTTLESLAQELQKAKELNDAMKAMRDSIMNQEQIRKNSNYTNEDLAQQNAYNHAVDKINNIIGEDNATMDPQIIKQATQDINTAINGLNGDQKLQDAKTDAKQQITNFTGLTEPQKQALENIINQQTSRANVAKQLSHAKFLNGKMEELKVAVAKASLVRQNSNYINEDVSEKEAYEQAIAKGQEIINSENNPTISSTDINRTIQEINDAEQNLHGDNKLRQAQEIAKNEIQNLDGLNSAQITKLIQDIGRTTTKPAVTQKLEEAKAINQAMQQLKQSIADKDATLNSSNYLNEDSEKKLAYDNAVSQAEQLINQLNDPTMDISNIQAITQKVIQAKDSLHGANKLAQNQADSNLIINQSTNLNDKQKQALNDLINHAQTKQQVAEIIAQANKLNNEMGTLKTLVEEQSNVHQQSKYINEDPQVQNIYNDSIQKGREILNGTTDDVLNNNKIADAIQNIHLTKNDLHGDQKLQKAQQDATNELNYLTNLNNSQRQSEHDEINSAPSRTEVSNDLNHAKALNEAMRQLENEVALENSVKKLSDFINEDEAAQNEYSNALQKAKDIINGVPSSTLDKATIEDALLELQNARESLHGEQKLQEAKNQAVAEIDNLQALNPGQVLAEKTLVNQASTKPEVQEALQKAKELNEAMKALKTEINKKEQIKADSRYVNADSGLQANYNSALNYGSQIIATTQPPELNKDVINRATQTIKTAENNLNGQSKLAEAKSDGNQSIEHLQGLTQSQKDKQHDLINQAQTKQQVDDIVNNSKQLDNSMNQLQQIVNNDNTVKQNSDFINEDSSQQDAYNHAIQAAKDLITAHPTIMDKNQIDQAIENIKQALNDLHGSNKLSEDKKEASEQLQNLNSLTNGQKDTILNHIFSAPTRSQVGEKIASAKQLNNTMKALRDSIADNNEILQSSKYFNEDSEQQNAYNQAVNKAKNIINDQPTPVMANDEIQSVLNEVKQTKDNLHGDQKLANDKTDAQATLNALNYLNQAQRGNLETKVQNSNSRPEVQKVVQLANQLNDAMKKLDDALTGNDAIKQTSNYINEDTSQQVNFDEYTDRGKNIVAEQTNPNMSPTNINTIADKITEAKNDLHGVQKLKQAQQQSINTINQMTGLNQAQKEQLNQEIQQTQTRSEVHQVINKAQALNDSMNTLRQSITDEHEVKQTSNYINETVGNQTAYNNAVDRVKQIINQTSNPTMNPLEVERATSNVKISKDALHGERELNDNKNSKTFAVNHLDNLNQAQKEALTHEIEQATIVSQVNNIYNKAKALNNDMKKLKDIVAQQDNVRQSNNYINEDSTPQNMYNDTINHAQSIIDQVANPTMSHDEIENAINNIKHAINALDGEHKLQQAKENANLLINSLNDLNAPQRDAINRLVNEAQTREKVAEQLQSAQALNDAMKHLRNSIQNQSSVRQESKYINASDAKKEQYNHAVREVENIINEQHPTLDKEIIKQLTDGVNQANNDLNGVELLDADKQNAHQSIPTLMHLNQAQQNALNEKINNAVTRTEVAAIIGQAKLLDHAMENLEESIKDKEQVKQSSNYINEDSDVQETYDNAVDHVTEILNQTVNPTLSIEDIEHAINEVNQAKKQLRGKQKLYQTIDLADKELSKLDDLTSQQSSSISNQIYTAKTRTEVAQAIEKAKSLNHAMKALNKVYKNADKVLDSSRFINEDQPEKKAYQQAINHVDSIIHRQTNPEMDPTVINSITHELETAQNNLHGDQKLAHAQQDAANVINGLIHLNVAQREVMINTNTNATTREKVAKNLDNAQALDKAMETLQQVVAHKNNILNDSKYLNEDSKYQQQYDRVIADAEQLLNQTTNPTLEPYKVDIVKDNVLANEKILFGAEKLSYDKSNANDEIKHMNYLNNAQKQSIKDMISHAALRTEVKQLLQQAKILDEAMKSLEDKTQVVITDTTLPNYTEASEDKKEKVDQTVSHAQAIIDKINGSNVSLDQVRQALEQLTQASENLDGDQRVEEAKVHANQTIDQLTHLNSLQQQTAKESVKNATKLEEIATVSNNAQALNKVMGKLEQFINHADSVENSDNYRQADDDKIIAYDEALEHGQDIQKTNATQNETKQALQQLIYAETSLNGFERLNHARPRALEYIKSLEKINNAQKSALEDKVTQSHDLLELEHIVNEGTNLNDIMGELANAIVNNYAPTKASINYINADNLRKDNFTQAINNARDALNKTQGQNLDFNAIDTFKDDIFKTKDALNGIERLTAAKSKAEKLIDSLKFINKAQFTHANDEIMNTNSIAQLSRIVNQAFDLNDAMKSLRDELNNQAFPVQASSNYINSDEDLKQQFDHALSNARKVLAKENGKNLDEKQIQGLKQVIEDTKDALNGIQRLSKAKAKAIQYVQSLSYINDAQRHIAENNIHNSDDLSSLANTLSKASDLDNAMKDLRDTIESNSTSVPNSVNYINADKNLQIEFDEALQQASATSSKTSENPATIEEVLGLSQAIYDTKNALNGEQRLATEKSKDLKLIKGLKDLNKAQLEDVTNKVNSANTLTELSQLTQSTLELNDKMKLLRDKLKTLVNPVKASLNYRNADYNLKRQFNKALKEAKGVLNKNSGTNVNINDIQHLLTQIDNAKDQLNGERRLKEHQQKSEVFIIKELDILNNAQKAAIINQIRASKDIKIINQIVDNAIELNDAMQGLKEHVAQLTATTKDNIEYLNADEDHKLQYDYAINLANNVLDKENGTNKDANIIIGMIQNMDDARALLNGIERLKDAQTKAHNDIKDTLKRQLDEIEHANATSNSKAQAKQMVNEEARKALSNINDATSNDLVNQAKDEGQSAIEHIHADELPKAKLDANQMIDQKVEDINHLISQNPNLSNEEKNKLISQINKLVNGIKNEIQQAINKQQIENATTKLDEVIETTKKLIIAKAEAKQMIKELSQKKRDAINNNTDLTPSQKAHALADIDKTEKDALQHIENSNSIDDINNNKEHAFNTLAHIIIWDTDQQPLVFELPELSLQNALVTSEVVVHRDETISLESIIGAMTLTDELKVNIVSLPNTDKVADHLTAKVKVILADGSYVTVNVPVKVVEKELQIAKKDAIKTIDVLVKQKIKDIDSNNELTSTQREDAKAEIERLKKQAIDKVNHSKSIKDIETVKRTDFEEIDQFDPKRFTLNKAKKDIITDVNTQIQNGFKEIETIKGLTSNEKTQFDKQLTALQKEFLEKVEHAHNLVELNQLQQEFNNRYKHILNQAHLLGEKHIAEHKLGYVVVNKTQQILNNQSASYFIKQWALDRIKQIQLETMNSIRGAHTVQDVHKALLQGIEQILKVNVSIINQSFNDSLHNFNYLHSKFDARLREKDVANHIVQTETFKEVLKGTGVEPGKINKETQQPKLHKNDNDSLFKHLVDNFGKTVGVITLTGLLSSFWLVLAKRRKKEEEEKQSIKNHHKDIRLSDTDKIDPIVITKRKIDKEEQIQNDDKHSIPVAKHKKSKEKQLSEEDIHSIPVVKRKQNSDNKDTKQKKVTSKKKKTPQSTKKVVKTKKRSKK.

FIVAR domains follow at residues 1815 to 1871 (ARRR…VNSA), 1901 to 1957 (AKEQ…INDA), 1985 to 2041 (AYDT…VRDA), 2071 to 2127 (AKKR…ITSE), 2155 to 2211 (AYNK…VTQA), 2241 to 2297 (AKNR…ISSE), 2325 to 2381 (AYNK…VEDA), 2411 to 2467 (AKEK…ITEN), 2488 to 2551 (DTTS…VNNA), 2581 to 2638 (ARNR…STEI), 2665 to 2720 (AKNQ…IRTN), 2748 to 2804 (AKTA…VSDE), 2832 to 2888 (AYNQ…VNNA), 2918 to 2974 (AKEQ…ISNA), 3002 to 3058 (AYNQ…VTAA), 3088 to 3144 (AKQQ…ITNE), 3172 to 3228 (AYNQ…VAQA), 3258 to 3314 (AKNQ…ISDE), 3335 to 3398 (DTTE…VNNA), 3428 to 3484 (ARLN…ITTE), 3512 to 3567 (AKTA…IKTN), 3595 to 3650 (IKRQ…VKES), 3678 to 3733 (AKNR…IRQN), 3802 to 3860 (SMTA…IDQK), 3928 to 3983 (AMTQ…LDPA), 4056 to 4114 (AMQA…VNQK), 4182 to 4240 (SMGT…VDNA), 4308 to 4365 (AMHT…INQK), 4433 to 4491 (VMEQ…IEQA), and 4559 to 4617 (SMQT…IDQT). The span at 2495 to 2507 (EVRKLSRRGDTNN) shows a compositional bias: basic and acidic residues. Residues 2495–2514 (EVRKLSRRGDTNNKKPSSVS) form a disordered region. The segment covering 2925 to 2938 (AVDQVPSTEGMTQQ) has biased composition (polar residues). Positions 2925–2951 (AVDQVPSTEGMTQQTKDDYNSKQQAAQ) are disordered. Positions 4649 to 4674 (GYLNDPQKSGEESLVNGSNTRSEVEE) are disordered. FIVAR domains lie at 4685–4743 (AMKQ…IEQK), 4811–4869 (AMQA…IEQA), 4937–4995 (AMSN…IEQA), 5063–5115 (AMEA…VLDK), 5189–5246 (AMLG…INQL), 5314–5372 (LMGA…VTTA), 5440–5498 (AMGE…IDQA), 5566–5624 (AMKK…ITNA), 5692–5750 (AMKQ…IADT), 5818–5875 (DMST…LQDL), 5943–6000 (AMKA…IKQA), 6068–6126 (KMEE…INRT), 6194–6252 (AMQQ…IQAI), and 6320–6378 (EMGT…IADA). Residues 5699-5712 (QVNQDDQISNSSPF) show a composition bias toward polar residues. Residues 5699–5719 (QVNQDDQISNSSPFINEDSDK) are disordered. A disordered region spans residues 6413-6434 (NNSQRQSEHDEINSAPSRTEVS). 18 consecutive FIVAR domains span residues 6446 to 6504 (AMRQ…IEDA), 6572 to 6630 (AMKA…INRA), 6698 to 6755 (SMNQ…IDQA), 6823 to 6877 (TMKA…ANDE), 6949 to 7007 (AMKK…INTI), 7075 to 7133 (SMNT…VERA), 7201 to 7259 (DMKK…IENA), 7327 to 7384 (AMKH…IKQL), 7452 to 7510 (AMEN…IEHA), 7578 to 7636 (AMKA…INSI), 7704 to 7762 (AMET…VDIV), 7830 to 7888 (AMKS…VRQA), 7956 to 8010 (VMGK…TKQA), 8078 to 8137 (IMGE…IDTF), 8205 to 8264 (AMKS…IQGL), 8332 to 8391 (AMKD…VLGL), 8459 to 8518 (KMKL…IQHL), and 8587 to 8643 (AMQG…ANII). A helical membrane pass occupies residues 9306–9324 (TVGVITLTGLLSSFWLVLA). 3 stretches are compositionally biased toward basic and acidic residues: residues 9363-9375 (DKEE…DKHS), 9386-9395 (EKQLSEEDIH), and 9404-9413 (QNSDNKDTKQ). The tract at residues 9363–9439 (DKEEQIQNDD…VVKTKKRSKK (77 aa)) is disordered. The span at 9414–9439 (KKVTSKKKKTPQSTKKVVKTKKRSKK) shows a compositional bias: basic residues.

It is found in the cell membrane. This chain is Extracellular matrix-binding protein ebh (ebh), found in Staphylococcus epidermidis (strain ATCC 12228 / FDA PCI 1200).